The chain runs to 120 residues: MLRFTDEHEWLRLDGDVATVGITAHAAEQLGDLVFVELPKVGVKLTKGEAAAVVESVKAASDVYAPLSGEVTEVNEAALSDPASVGADPQGAGWLYRLKLDDVSAMDALMDEAAYADFAK.

In terms of domain architecture, Lipoyl-binding spans 17–99; it reads VATVGITAHA…QGAGWLYRLK (83 aa). Lysine 58 is modified (N6-lipoyllysine).

It belongs to the GcvH family. In terms of assembly, the glycine cleavage system is composed of four proteins: P, T, L and H. The cofactor is (R)-lipoate.

Functionally, the glycine cleavage system catalyzes the degradation of glycine. The H protein shuttles the methylamine group of glycine from the P protein to the T protein. The sequence is that of Glycine cleavage system H protein from Methylorubrum populi (strain ATCC BAA-705 / NCIMB 13946 / BJ001) (Methylobacterium populi).